A 244-amino-acid chain; its full sequence is Probable transcriptional regulatory protein CHAB381_1426 (244 aa).

Belongs to the TACO1 family.

Its subcellular location is the cytoplasm. This is Probable transcriptional regulatory protein CHAB381_1426 from Campylobacter hominis (strain ATCC BAA-381 / DSM 21671 / CCUG 45161 / LMG 19568 / NCTC 13146 / CH001A).